Here is a 425-residue protein sequence, read N- to C-terminus: Glutamyl-tRNA reductase (425 aa).

Substrate is bound by residues 49-52 (TCNR), Ser107, 112-114 (EPQ), and Gln118. Catalysis depends on Cys50, which acts as the Nucleophile. Residue 187–192 (GAGETI) participates in NADP(+) binding.

The protein belongs to the glutamyl-tRNA reductase family. In terms of assembly, homodimer.

It carries out the reaction (S)-4-amino-5-oxopentanoate + tRNA(Glu) + NADP(+) = L-glutamyl-tRNA(Glu) + NADPH + H(+). The protein operates within porphyrin-containing compound metabolism; protoporphyrin-IX biosynthesis; 5-aminolevulinate from L-glutamyl-tRNA(Glu): step 1/2. In terms of biological role, catalyzes the NADPH-dependent reduction of glutamyl-tRNA(Glu) to glutamate 1-semialdehyde (GSA). The sequence is that of Glutamyl-tRNA reductase from Pseudomonas syringae pv. tomato (strain ATCC BAA-871 / DC3000).